A 360-amino-acid polypeptide reads, in one-letter code: MTTTLERRESASFWEQFCAWITSTENRLYIGWFGCLMFPTLLSAISAYIIAFIAAPPVDIDGIREPVAGSLLYGNNIISGAVVPSSNAIGVHFYPIWEAASIDEWLYNGGTYQLVVLHFFIGVCAYIGREWELSYRLGMRPWICVAFSAPVAAAAAVFVIYPIGQGSFSDGMPLGISGTFNFMLVFQAEHNILMHPFHMLGVAGVFGGSLFSAMHGSLVTSSLIRETTENESANYGYKFGQEEETYNIVAAHGYFGRLIFQYASFNNSRALHFFLGAWPVVGIWFTAMGVATMAFNLNGFNFNQSVVDSQGRVINTWADILNRSNLGMEVMHERNAHNFPLDLAAGESLPVALVAPAVAA.

A run of 3 helical transmembrane segments spans residues 29-46 (YIGWFGCLMFPTLLSAIS), 118-133 (HFFIGVCAYIGREWEL), and 142-156 (WICVAFSAPVAAAAA). A chlorophyll a-binding site is contributed by His-118. Tyr-126 is a pheophytin a binding site. Asp-170 and Glu-189 together coordinate [CaMn4O5] cluster. The chain crosses the membrane as a helical span at residues 197–218 (FHMLGVAGVFGGSLFSAMHGSL). His-198 serves as a coordination point for chlorophyll a. A quinone is bound by residues His-215 and 264–265 (SF). Position 215 (His-215) interacts with Fe cation. His-272 is a Fe cation binding site. Residues 274–288 (FLGAWPVVGIWFTAM) traverse the membrane as a helical segment. [CaMn4O5] cluster-binding residues include His-332, Glu-333, Asp-342, and Ala-344. A propeptide spanning residues 345–360 (AGESLPVALVAPAVAA) is cleaved from the precursor.

This sequence belongs to the reaction center PufL/M/PsbA/D family. As to quaternary structure, PSII is composed of 1 copy each of membrane proteins PsbA, PsbB, PsbC, PsbD, PsbE, PsbF, PsbH, PsbI, PsbJ, PsbK, PsbL, PsbM, PsbT, PsbX, PsbY, PsbZ, Psb30/Ycf12, at least 3 peripheral proteins of the oxygen-evolving complex and a large number of cofactors. It forms dimeric complexes. It depends on The D1/D2 heterodimer binds P680, chlorophylls that are the primary electron donor of PSII, and subsequent electron acceptors. It shares a non-heme iron and each subunit binds pheophytin, quinone, additional chlorophylls, carotenoids and lipids. D1 provides most of the ligands for the Mn4-Ca-O5 cluster of the oxygen-evolving complex (OEC). There is also a Cl(-1) ion associated with D1 and D2, which is required for oxygen evolution. The PSII complex binds additional chlorophylls, carotenoids and specific lipids. as a cofactor. Tyr-161 forms a radical intermediate that is referred to as redox-active TyrZ, YZ or Y-Z. In terms of processing, C-terminally processed by CTPA; processing is essential to allow assembly of the oxygen-evolving complex and thus photosynthetic growth.

The protein localises to the plastid. Its subcellular location is the chloroplast thylakoid membrane. The catalysed reaction is 2 a plastoquinone + 4 hnu + 2 H2O = 2 a plastoquinol + O2. Functionally, photosystem II (PSII) is a light-driven water:plastoquinone oxidoreductase that uses light energy to abstract electrons from H(2)O, generating O(2) and a proton gradient subsequently used for ATP formation. It consists of a core antenna complex that captures photons, and an electron transfer chain that converts photonic excitation into a charge separation. The D1/D2 (PsbA/PsbD) reaction center heterodimer binds P680, the primary electron donor of PSII as well as several subsequent electron acceptors. In Emiliania huxleyi (Coccolithophore), this protein is Photosystem II protein D1.